The following is a 462-amino-acid chain: uncharacterized protein (462 aa).

The next 2 membrane-spanning stretches (helical) occupy residues 12-32 and 257-277; these read WWWLTFGCARTVTVGFVAPTV and GLCVDLLVCVLLLALLLLELV.

The protein belongs to the HHV-5 US29 protein family.

The protein localises to the host membrane. This is an uncharacterized protein from Human cytomegalovirus (strain AD169) (HHV-5).